The following is a 253-amino-acid chain: GTP cyclohydrolase III 2 (253 aa).

Positions leucine 102–phenylalanine 125 are disordered.

This sequence belongs to the archaeal-type GTP cyclohydrolase family.

It carries out the reaction GTP + 3 H2O = 2-amino-5-formylamino-6-(5-phospho-D-ribosylamino)pyrimidin-4(3H)-one + 2 phosphate + 2 H(+). In terms of biological role, catalyzes the formation of 2-amino-5-formylamino-6-ribofuranosylamino-4(3H)-pyrimidinone ribonucleotide monophosphate and inorganic phosphate from GTP. Also has an independent pyrophosphate phosphohydrolase activity. This Halobacterium salinarum (strain ATCC 700922 / JCM 11081 / NRC-1) (Halobacterium halobium) protein is GTP cyclohydrolase III 2 (gch32).